Reading from the N-terminus, the 666-residue chain is 7SK snRNA methylphosphate capping enzyme (666 aa).

Residue methionine 1 is modified to N-acetylmethionine. Basic and acidic residues predominate over residues methionine 1 to proline 10. Residues methionine 1 to alanine 141 form a disordered region. The segment covering glycine 50–alanine 61 has biased composition (low complexity). Position 57 is a phosphoserine (serine 57). Arginine 91 carries the omega-N-methylarginine modification. Serine 126, serine 150, and serine 154 each carry phosphoserine. Threonine 188 carries the post-translational modification Phosphothreonine. 3 positions are modified to phosphoserine: serine 191, serine 192, and serine 229. The segment covering arginine 235–histidine 244 has biased composition (basic residues). The interval arginine 235–glutamine 291 is disordered. Over residues histidine 245–glycine 254 the composition is skewed to low complexity. Position 268 is a phosphothreonine (threonine 268). Phosphoserine is present on residues serine 307 and serine 321. Positions leucine 309–serine 337 are enriched in low complexity. The tract at residues leucine 309–phenylalanine 383 is disordered. Basic residues predominate over residues serine 338–serine 347. At serine 368 the chain carries Phosphoserine. Residues tyrosine 399, arginine 410, glycine 428–asparagine 430, aspartate 451–isoleucine 452, asparagine 536–tyrosine 537, and phenylalanine 558 contribute to the S-adenosyl-L-methionine site. The 256-residue stretch at aspartate 408–serine 663 folds into the Bin3-type SAM domain. A Glycyl lysine isopeptide (Lys-Gly) (interchain with G-Cter in SUMO2) cross-link involves residue lysine 620.

This sequence belongs to the methyltransferase superfamily. As to quaternary structure, core component of the 7SK RNP complex, at least composed of 7SK RNA, LARP7, MEPCE, HEXIM1 (or HEXIM2) and P-TEFb (composed of CDK9 and CCNT1/cyclin-T1). Interacts with METTL16. Interacts with RBM7; upon genotoxic stress this interaction is enhanced, triggering the release of inactive P-TEFb complex from the core, yielding to P-TEFb complex activation. In terms of processing, dephosphorylated at Ser-126 by the PNUTS-PP1 complex, promoting RNA polymerase II transcription pause-release.

The protein localises to the nucleus. It carries out the reaction a 5'-end triphospho-guanosine-ribonucleotide-snRNA + S-adenosyl-L-methionine = a 5'-end methyltriphosphate-guanosine-ribonucleotide-snRNA + S-adenosyl-L-homocysteine. In terms of biological role, S-adenosyl-L-methionine-dependent methyltransferase that adds a methylphosphate cap at the 5'-end of 7SK snRNA (7SK RNA), leading to stabilize it. Also has a non-enzymatic function as part of the 7SK RNP complex: the 7SK RNP complex sequesters the positive transcription elongation factor b (P-TEFb) in a large inactive 7SK RNP complex preventing RNA polymerase II phosphorylation and subsequent transcriptional elongation. The 7SK RNP complex also promotes snRNA gene transcription by RNA polymerase II via interaction with the little elongation complex (LEC). In the 7SK RNP complex, MEPCE is required to stabilize 7SK RNA and facilitate the assembly of 7SK RNP complex. MEPCE has a non-enzymatic function in the 7SK RNP complex; it has a non-enzymatic function; interaction with LARP7 within the 7SK RNP complex occluding its catalytic center. Also required for stability of U6 snRNAs. The sequence is that of 7SK snRNA methylphosphate capping enzyme from Mus musculus (Mouse).